A 429-amino-acid chain; its full sequence is 4-hydroxyphenylacetate degradation bifunctional isomerase/decarboxylase (429 aa).

Approximate repeat units lie at residues 1–215 (MKGT…RKSF) and 216–429 (PTLP…ETAK). A divalent metal cation-binding residues include E276, E278, and D307.

It belongs to the FAH family. In terms of assembly, monomer. Mg(2+) serves as cofactor.

It catalyses the reaction (2E,4Z)-5-hydroxypenta-2,4-diene-1,2,5-tricarboxylate = (3E,5R)-5-carboxy-2-oxohept-3-enedioate. The catalysed reaction is (3E,5R)-5-carboxy-2-oxohept-3-enedioate + H(+) = (4Z)-2-oxohept-4-enedioate + CO2. The protein operates within aromatic compound metabolism; 4-hydroxyphenylacetate degradation; pyruvate and succinate semialdehyde from 4-hydroxyphenylacetate: step 4/7. It functions in the pathway aromatic compound metabolism; 4-hydroxyphenylacetate degradation; pyruvate and succinate semialdehyde from 4-hydroxyphenylacetate: step 5/7. Functionally, decarboxylates OPET (5-oxo-pent-3-ene-1,2,5-tricarboxylic acid) into HHDD (2-hydroxy-hept-2,4-diene-1,7-dioate) and isomerizes it to OHED (2-oxo-hept-3-ene-1,7-dioate). This chain is 4-hydroxyphenylacetate degradation bifunctional isomerase/decarboxylase (hpaG), found in Escherichia coli.